Here is a 225-residue protein sequence, read N- to C-terminus: Small ribosomal subunit protein uS2 (225 aa).

Over residues 1-13 the composition is skewed to basic and acidic residues; it reads MAEAKPALEKEAA. Positions 1–33 are disordered; the sequence is MAEAKPALEKEAAVKTGSIPSESEDETASHKEG.

It belongs to the universal ribosomal protein uS2 family.

The polypeptide is Small ribosomal subunit protein uS2 (Methanosarcina acetivorans (strain ATCC 35395 / DSM 2834 / JCM 12185 / C2A)).